Consider the following 266-residue polypeptide: Isopentenyl phosphate kinase (266 aa).

Lysine 5–serine 9 lines the ATP pocket. Alanine 47 contacts substrate. Glycine 48 contacts ATP. 2 residues coordinate substrate: histidine 52 and glycine 157. Residues aspartate 178, tyrosine 183 to lysine 188, glycine 219, and lysine 223 each bind ATP.

It belongs to the isopentenyl phosphate kinase family. In terms of assembly, homodimer.

It catalyses the reaction isopentenyl phosphate + ATP = isopentenyl diphosphate + ADP. In terms of biological role, catalyzes the formation of isopentenyl diphosphate (IPP), the building block of all isoprenoids. Has lower activity with dimethylallyl phosphate (DMAP) and isopentenyl thiolophosphate (ISP). Has low activity with 1-butyl phosphate (BP) and 3-buten-1-yl phosphate (BEP). Has no significant activity with geranyl phosphate (in vitro). This chain is Isopentenyl phosphate kinase, found in Methanothermobacter thermautotrophicus (strain ATCC 29096 / DSM 1053 / JCM 10044 / NBRC 100330 / Delta H) (Methanobacterium thermoautotrophicum).